The primary structure comprises 467 residues: MLYSEDDKRKQESYRIPLFGSEEESTSIPKYVLKKEPMEPRIAYQLVKDQLMDEGNARQNLATFCQTYMEKEAEILMAETLEKNAIDKSEYPQTAELENRCVNILADLWNAPKDMSYLGTSTVGSSEACMLGGLAMKFRWRNNAEKRGLDIQAKRPNLIISSGYQVCWEKFCVYWDVDMRVVPMDKNHLSLDVDKVFDLVDEYTIGVVGILGITYTGKFDDIQLLDEKVEAYNETNEHQLVIHIDGASGAMFTPFVNPELPWDFRLKNVVSINTSGHKYGLVYPGVGWILWKDKEYLPKELIFEVSYLGGSMPTMAINFSRSASQIIGQYYNFLRYGFEGYREIHEKTKKTAIYLAKTVEKSGYFEIINDGANLPIVCYKMKEGLDVEWTLYDLADQLLMKGWQVPAYPLPADLSDTIIQRFVCRADLGYNVAEEFAADFADAIHNLEHARVLYHDKERNDSYGFTH.

Lys-278 carries the N6-(pyridoxal phosphate)lysine modification.

The protein belongs to the group II decarboxylase family. Pyridoxal 5'-phosphate serves as cofactor.

The enzyme catalyses L-glutamate + H(+) = 4-aminobutanoate + CO2. This chain is Probable glutamate decarboxylase gamma, found in Listeria monocytogenes serovar 1/2a (strain ATCC BAA-679 / EGD-e).